A 288-amino-acid polypeptide reads, in one-letter code: 4-diphosphocytidyl-2-C-methyl-D-erythritol kinase (288 aa).

Lysine 13 is an active-site residue. ATP is bound at residue 97-107; the sequence is PMGGGIGGGSS. Residue aspartate 139 is part of the active site.

This sequence belongs to the GHMP kinase family. IspE subfamily.

It carries out the reaction 4-CDP-2-C-methyl-D-erythritol + ATP = 4-CDP-2-C-methyl-D-erythritol 2-phosphate + ADP + H(+). The protein operates within isoprenoid biosynthesis; isopentenyl diphosphate biosynthesis via DXP pathway; isopentenyl diphosphate from 1-deoxy-D-xylulose 5-phosphate: step 3/6. Functionally, catalyzes the phosphorylation of the position 2 hydroxy group of 4-diphosphocytidyl-2C-methyl-D-erythritol. In Saccharophagus degradans (strain 2-40 / ATCC 43961 / DSM 17024), this protein is 4-diphosphocytidyl-2-C-methyl-D-erythritol kinase.